A 344-amino-acid chain; its full sequence is Anthranilate phosphoribosyltransferase (344 aa).

Residues glycine 81, 84–85, serine 89, 91–94, 109–117, and alanine 121 contribute to the 5-phospho-alpha-D-ribose 1-diphosphate site; these read GD, NIST, and KHGNRALSS. Glycine 81 is a binding site for anthranilate. Serine 93 provides a ligand contact to Mg(2+). Asparagine 112 contributes to the anthranilate binding site. Anthranilate is bound at residue arginine 167. The Mg(2+) site is built by aspartate 226 and glutamate 227.

It belongs to the anthranilate phosphoribosyltransferase family. Homodimer. Mg(2+) is required as a cofactor.

The catalysed reaction is N-(5-phospho-beta-D-ribosyl)anthranilate + diphosphate = 5-phospho-alpha-D-ribose 1-diphosphate + anthranilate. The protein operates within amino-acid biosynthesis; L-tryptophan biosynthesis; L-tryptophan from chorismate: step 2/5. Its function is as follows. Catalyzes the transfer of the phosphoribosyl group of 5-phosphorylribose-1-pyrophosphate (PRPP) to anthranilate to yield N-(5'-phosphoribosyl)-anthranilate (PRA). The chain is Anthranilate phosphoribosyltransferase from Azorhizobium caulinodans (strain ATCC 43989 / DSM 5975 / JCM 20966 / LMG 6465 / NBRC 14845 / NCIMB 13405 / ORS 571).